Reading from the N-terminus, the 176-residue chain is MCSMWLMASWLMAFVAGSTLADYCGDHKVPFGMEVHKNGNVNILCSRPSCHEKKYAECPERATSTTCSTNSSWVGGVTQHSDGSLRLMCCEYDLLPTYSTIQYEKLTIRTGEYFEGDEQMEGDVVTAFDLIGNIEQVKEPDGKYSYNLLIYRYHCGNIPDTPPAWYMKKQWPYWEK.

An N-terminal signal peptide occupies residues 1–21 (MCSMWLMASWLMAFVAGSTLA). Asparagine 70 is a glycosylation site (N-linked (GlcNAc...) asparagine).

Expressed in seam cells, excretory cell, reproductive system, pharynx, pharyngeal-intestinal valve cells, neurons and neuronal support cells.

The protein resides in the secreted. Functionally, intercellular signal essential for a variety of patterning events during development. In Caenorhabditis elegans, this protein is Warthog protein 5 (wrt-5).